The chain runs to 318 residues: NADH-ubiquinone oxidoreductase chain 1 (318 aa).

8 consecutive transmembrane segments (helical) span residues 2-22 (PVINLLLLTMSILIAMAFLML), 69-89 (ILYIVSPALALTIALLLWTPL), 100-120 (LGLLFILATSSLTVYSILWSG), 146-166 (LALILLSVLLMSGSFNLSTLI), 171-191 (HSWLLLPSWPLALMWFISTLA), 222-242 (LFFMAEYTNIILMNALTAMIF), 253-273 (ELHTTLFTIKTLLLTSLFLWI), and 294-314 (LPLTLALLMWHISMPITTSGI).

This sequence belongs to the complex I subunit 1 family. In terms of assembly, core subunit of respiratory chain NADH dehydrogenase (Complex I) which is composed of 45 different subunits.

Its subcellular location is the mitochondrion inner membrane. It carries out the reaction a ubiquinone + NADH + 5 H(+)(in) = a ubiquinol + NAD(+) + 4 H(+)(out). Functionally, core subunit of the mitochondrial membrane respiratory chain NADH dehydrogenase (Complex I) which catalyzes electron transfer from NADH through the respiratory chain, using ubiquinone as an electron acceptor. Essential for the catalytic activity and assembly of complex I. The sequence is that of NADH-ubiquinone oxidoreductase chain 1 (MT-ND1) from Pongo pygmaeus (Bornean orangutan).